A 287-amino-acid polypeptide reads, in one-letter code: Diphthine methyl ester synthase (287 aa).

Residues Leu9, Asp84, Gly87, 112–113 (SI), Leu163, Val221, and His248 contribute to the S-adenosyl-L-methionine site.

The protein belongs to the diphthine synthase family.

It is found in the cytoplasm. The catalysed reaction is 2-[(3S)-amino-3-carboxypropyl]-L-histidyl-[translation elongation factor 2] + 4 S-adenosyl-L-methionine = diphthine methyl ester-[translation elongation factor 2] + 4 S-adenosyl-L-homocysteine + 3 H(+). The protein operates within protein modification; peptidyl-diphthamide biosynthesis. Functionally, S-adenosyl-L-methionine-dependent methyltransferase that catalyzes four methylations of the modified target histidine residue in translation elongation factor 2 (EF-2), to form an intermediate called diphthine methyl ester. The four successive methylation reactions represent the second step of diphthamide biosynthesis. The sequence is that of Diphthine methyl ester synthase (dph-5) from Neurospora crassa (strain ATCC 24698 / 74-OR23-1A / CBS 708.71 / DSM 1257 / FGSC 987).